The following is a 425-amino-acid chain: Enolase (425 aa).

Gln162 contacts (2R)-2-phosphoglycerate. Residue Glu204 is the Proton donor of the active site. Residues Asp241, Glu282, and Asp309 each contribute to the Mg(2+) site. (2R)-2-phosphoglycerate contacts are provided by Lys334, Arg363, Ser364, and Lys385. The Proton acceptor role is filled by Lys334.

This sequence belongs to the enolase family. Mg(2+) is required as a cofactor.

The protein resides in the cytoplasm. Its subcellular location is the secreted. It localises to the cell surface. It catalyses the reaction (2R)-2-phosphoglycerate = phosphoenolpyruvate + H2O. It functions in the pathway carbohydrate degradation; glycolysis; pyruvate from D-glyceraldehyde 3-phosphate: step 4/5. Its function is as follows. Catalyzes the reversible conversion of 2-phosphoglycerate (2-PG) into phosphoenolpyruvate (PEP). It is essential for the degradation of carbohydrates via glycolysis. This chain is Enolase, found in Corynebacterium jeikeium (strain K411).